The sequence spans 175 residues: Ribosome maturation factor RimM (175 aa).

The region spanning 95-175 (SEDEFYWREL…RIEVDWDPGF (81 aa)) is the PRC barrel domain.

Belongs to the RimM family. As to quaternary structure, binds ribosomal protein uS19.

It is found in the cytoplasm. In terms of biological role, an accessory protein needed during the final step in the assembly of 30S ribosomal subunit, possibly for assembly of the head region. Essential for efficient processing of 16S rRNA. May be needed both before and after RbfA during the maturation of 16S rRNA. It has affinity for free ribosomal 30S subunits but not for 70S ribosomes. In Aliivibrio fischeri (strain MJ11) (Vibrio fischeri), this protein is Ribosome maturation factor RimM.